Here is a 160-residue protein sequence, read N- to C-terminus: 6,7-dimethyl-8-ribityllumazine synthase (160 aa).

Residues Trp26, 58 to 60 (AIE), and 80 to 82 (VVI) each bind 5-amino-6-(D-ribitylamino)uracil. A (2S)-2-hydroxy-3-oxobutyl phosphate-binding site is contributed by 85 to 86 (ET). His88 serves as the catalytic Proton donor. Asn113 lines the 5-amino-6-(D-ribitylamino)uracil pocket. Arg127 contacts (2S)-2-hydroxy-3-oxobutyl phosphate.

This sequence belongs to the DMRL synthase family. In terms of assembly, homopentamer.

It catalyses the reaction (2S)-2-hydroxy-3-oxobutyl phosphate + 5-amino-6-(D-ribitylamino)uracil = 6,7-dimethyl-8-(1-D-ribityl)lumazine + phosphate + 2 H2O + H(+). Its pathway is cofactor biosynthesis; riboflavin biosynthesis; riboflavin from 2-hydroxy-3-oxobutyl phosphate and 5-amino-6-(D-ribitylamino)uracil: step 1/2. Catalyzes the formation of 6,7-dimethyl-8-ribityllumazine by condensation of 5-amino-6-(D-ribitylamino)uracil with 3,4-dihydroxy-2-butanone 4-phosphate. This is the penultimate step in the biosynthesis of riboflavin. This is 6,7-dimethyl-8-ribityllumazine synthase from Mycobacteroides abscessus (strain ATCC 19977 / DSM 44196 / CCUG 20993 / CIP 104536 / JCM 13569 / NCTC 13031 / TMC 1543 / L948) (Mycobacterium abscessus).